We begin with the raw amino-acid sequence, 533 residues long: CTP synthase (533 aa).

The amidoligase domain stretch occupies residues 1–268; sequence MGETKYIFVT…DETILQKMGL (268 aa). Position 15 (Ser-15) interacts with CTP. Residue Ser-15 coordinates UTP. 16–21 is an ATP binding site; that stretch reads SLGKGI. Residue Tyr-56 participates in L-glutamine binding. Position 73 (Asp-73) interacts with ATP. The Mg(2+) site is built by Asp-73 and Glu-143. Residues 150–152, 189–194, and Lys-225 contribute to the CTP site; these read DIE and KTKPTQ. Residues 189–194 and Lys-225 contribute to the UTP site; that span reads KTKPTQ. A Glutamine amidotransferase type-1 domain is found at 301-533; sequence YVELQDAYKS…VSFIKAAIDK (233 aa). Gly-356 contributes to the L-glutamine binding site. Cys-383 (nucleophile; for glutamine hydrolysis) is an active-site residue. Residues 384–387, Glu-407, and Arg-464 each bind L-glutamine; that span reads LGMQ. Catalysis depends on residues His-509 and Glu-511.

Belongs to the CTP synthase family. Homotetramer.

It catalyses the reaction UTP + L-glutamine + ATP + H2O = CTP + L-glutamate + ADP + phosphate + 2 H(+). It carries out the reaction L-glutamine + H2O = L-glutamate + NH4(+). The catalysed reaction is UTP + NH4(+) + ATP = CTP + ADP + phosphate + 2 H(+). It participates in pyrimidine metabolism; CTP biosynthesis via de novo pathway; CTP from UDP: step 2/2. Its activity is regulated as follows. Allosterically activated by GTP, when glutamine is the substrate; GTP has no effect on the reaction when ammonia is the substrate. The allosteric effector GTP functions by stabilizing the protein conformation that binds the tetrahedral intermediate(s) formed during glutamine hydrolysis. Inhibited by the product CTP, via allosteric rather than competitive inhibition. In terms of biological role, catalyzes the ATP-dependent amination of UTP to CTP with either L-glutamine or ammonia as the source of nitrogen. Regulates intracellular CTP levels through interactions with the four ribonucleotide triphosphates. The chain is CTP synthase from Bacteroides fragilis (strain YCH46).